The following is a 378-amino-acid chain: H repeat-associated putative transposase YhhI (378 aa).

This sequence belongs to the transposase 11 family.

This Escherichia coli (strain K12) protein is H repeat-associated putative transposase YhhI (yhhI).